The following is a 193-amino-acid chain: dCTP deaminase (193 aa).

DCTP-binding positions include 110-115 (RSSLAR), Asp128, 136-138 (VLE), Tyr171, Lys178, and Gln182. The Proton donor/acceptor role is filled by Glu138. A disordered region spans residues 170–193 (PYNSRQDAKYRGQQGAVASRIDKD).

The protein belongs to the dCTP deaminase family. Homotrimer.

The enzyme catalyses dCTP + H2O + H(+) = dUTP + NH4(+). It participates in pyrimidine metabolism; dUMP biosynthesis; dUMP from dCTP (dUTP route): step 1/2. In terms of biological role, catalyzes the deamination of dCTP to dUTP. This chain is dCTP deaminase, found in Yersinia enterocolitica serotype O:8 / biotype 1B (strain NCTC 13174 / 8081).